The chain runs to 352 residues: Photosystem II D2 protein (352 aa).

T2 carries the N-acetylthreonine modification. T2 carries the phosphothreonine modification. Residues 40 to 60 (TAYLALGGWFTGTTFVTSWYT) traverse the membrane as a helical segment. Residue H117 coordinates chlorophyll a. The chain crosses the membrane as a helical span at residues 124–140 (GFMLRQFEIARSVKIRP). 2 residues coordinate pheophytin a: Q129 and N142. The chain crosses the membrane as a helical span at residues 152–165 (VFVSVFLIYPLGQS). Position 197 (H197) interacts with chlorophyll a. A helical transmembrane segment spans residues 207-227 (AALLCAIHGATVENTLFEDGD). H214 and F261 together coordinate a plastoquinone. H214 contacts Fe cation. H268 lines the Fe cation pocket. A helical membrane pass occupies residues 278–294 (GLWMSAIGVVGLALNLR).

This sequence belongs to the reaction center PufL/M/PsbA/D family. As to quaternary structure, PSII is composed of 1 copy each of membrane proteins PsbA, PsbB, PsbC, PsbD, PsbE, PsbF, PsbH, PsbI, PsbJ, PsbK, PsbL, PsbM, PsbT, PsbX, PsbY, PsbZ, Psb30/Ycf12, at least 3 peripheral proteins of the oxygen-evolving complex and a large number of cofactors. It forms dimeric complexes. The cofactor is The D1/D2 heterodimer binds P680, chlorophylls that are the primary electron donor of PSII, and subsequent electron acceptors. It shares a non-heme iron and each subunit binds pheophytin, quinone, additional chlorophylls, carotenoids and lipids. There is also a Cl(-1) ion associated with D1 and D2, which is required for oxygen evolution. The PSII complex binds additional chlorophylls, carotenoids and specific lipids..

The protein localises to the plastid. Its subcellular location is the chloroplast thylakoid membrane. The catalysed reaction is 2 a plastoquinone + 4 hnu + 2 H2O = 2 a plastoquinol + O2. Photosystem II (PSII) is a light-driven water:plastoquinone oxidoreductase that uses light energy to abstract electrons from H(2)O, generating O(2) and a proton gradient subsequently used for ATP formation. It consists of a core antenna complex that captures photons, and an electron transfer chain that converts photonic excitation into a charge separation. The D1/D2 (PsbA/PsbD) reaction center heterodimer binds P680, the primary electron donor of PSII as well as several subsequent electron acceptors. D2 is needed for assembly of a stable PSII complex. This Chlorella vulgaris (Green alga) protein is Photosystem II D2 protein.